We begin with the raw amino-acid sequence, 165 residues long: Neurotrophin-3 (165 aa).

The N-terminal stretch at 1 to 3 is a signal peptide; that stretch reads IQS. A propeptide spanning residues 4 to 119 is cleaved from the precursor; it reads TSMDQGSLSE…VLNRTSRRKR (116 aa). Residues 32-61 are disordered; that stretch reads KVPKQAARTKDGTQTTAKKTEAEPEATANK. An N-linked (GlcNAc...) asparagine glycan is attached at Asn-112.

Belongs to the NGF-beta family.

Its subcellular location is the secreted. Seems to promote the survival of visceral and proprioceptive sensory neurons. This chain is Neurotrophin-3 (NTF3), found in Xenopeltis unicolor (Sunbeam snake).